The primary structure comprises 1131 residues: DNA polymerase II large subunit (1131 aa).

Belongs to the archaeal DNA polymerase II family. Heterodimer of a large subunit and a small subunit.

The enzyme catalyses DNA(n) + a 2'-deoxyribonucleoside 5'-triphosphate = DNA(n+1) + diphosphate. The catalysed reaction is Exonucleolytic cleavage in the 3'- to 5'-direction to yield nucleoside 5'-phosphates.. Possesses two activities: a DNA synthesis (polymerase) and an exonucleolytic activity that degrades single-stranded DNA in the 3'- to 5'-direction. Has a template-primer preference which is characteristic of a replicative DNA polymerase. The protein is DNA polymerase II large subunit of Methanococcus maripaludis (strain C7 / ATCC BAA-1331).